Here is a 47-residue protein sequence, read N- to C-terminus: U18-ctenitoxin-Pn1a (47 aa).

5 cysteine pairs are disulfide-bonded: Cys-2-Cys-16, Cys-9-Cys-22, Cys-13-Cys-46, Cys-15-Cys-34, and Cys-24-Cys-32.

In terms of tissue distribution, expressed by the venom gland.

Its subcellular location is the secreted. Neurotoxin. Causes spastic paralysis and death in mice by intracerebroventricular injection at dose levels of 3 ug per mouse. The protein is U18-ctenitoxin-Pn1a of Phoneutria nigriventer (Brazilian armed spider).